The chain runs to 181 residues: Ribulose bisphosphate carboxylase small subunit, chloroplastic 2 (181 aa).

A chloroplast-targeting transit peptide spans 1-57 (MASSVISSAAVATRTNVTQAGSMIAPFTGLKSAATFPVSRKQNLDITSIASNGGRVR).

Belongs to the RuBisCO small chain family. Heterohexadecamer of 8 large and 8 small subunits.

It is found in the plastid. The protein localises to the chloroplast. RuBisCO catalyzes two reactions: the carboxylation of D-ribulose 1,5-bisphosphate, the primary event in carbon dioxide fixation, as well as the oxidative fragmentation of the pentose substrate. Both reactions occur simultaneously and in competition at the same active site. Although the small subunit is not catalytic it is essential for maximal activity. This chain is Ribulose bisphosphate carboxylase small subunit, chloroplastic 2, found in Solanum tuberosum (Potato).